A 244-amino-acid polypeptide reads, in one-letter code: Ethylene-responsive transcription factor ERF013 (244 aa).

The disordered stretch occupies residues 1-33 (MVKQELKIQVTTSSSSLSHSSSSSSSSTSALRH). The span at 11–29 (TTSSSSLSHSSSSSSSSTS) shows a compositional bias: low complexity. A DNA-binding region (AP2/ERF) is located at residues 42–99 (KYKGVRMRSWGSWVTEIRAPNQKTRIWLGSYSTAEAAARAYDAALLCLKGPKANLNFP). The interval 123–178 (QKVAAQAANSSSDHFTPPSDENDHDHDDGLDHHPSASSSAASSPPDDDHHNDDDGD) is disordered. A compositionally biased stretch (basic and acidic residues) spans 143–156 (ENDHDHDDGLDHHP). Residues 157–166 (SASSSAASSP) are compositionally biased toward low complexity.

The protein belongs to the AP2/ERF transcription factor family. ERF subfamily.

The protein resides in the nucleus. In terms of biological role, probably acts as a transcriptional activator. Binds to the GCC-box pathogenesis-related promoter element. May be involved in the regulation of gene expression by stress factors and by components of stress signal transduction pathways. The protein is Ethylene-responsive transcription factor ERF013 (ERF013) of Arabidopsis thaliana (Mouse-ear cress).